Here is a 79-residue protein sequence, read N- to C-terminus: Eumenine mastoparan-OD (79 aa).

An N-terminal signal peptide occupies residues 1–24 (MKQTIVIVLLAAVAMMACLQMVAA). AXPX repeat units follow at residues 24–27 (AEPL), 30–33 (AAPA), 44–47 (ASPI), 52–55 (ANPE), and 58–61 (ASPE). Positions 25 to 62 (EPLPEAAPAPSPLAEAEALASPIAEALANPEALASPEA) are excised as a propeptide. At L76 the chain carries Leucine amide.

Expressed by the venom gland.

It is found in the secreted. The protein localises to the target cell membrane. Its function is as follows. Antimicrobial peptide with strong activity against the fungi C.albicans (MIC=6 uM) and B.cinerea (MIC=10 uM), and weaker activity against the Gram-negative bacterium E.coli (MIC=97 uM) and Gram-positive bacterium S.aureus (MIC=97 uM). Shows cytolytic activity against insect cell lines. Has potent hemolytic activity against ovine erythrocytes (80% at 50 uM), but has no hemolytic activity against human erythrocytes. In vivo, peptide injection in the vicinity of the head and thorax of lepidopteran larvae induces feeding disorder that lasts one or two days before recovering. This is Eumenine mastoparan-OD from Orancistrocerus drewseni (Solitary wasp).